Reading from the N-terminus, the 285-residue chain is ATP phosphoribosyltransferase (285 aa).

It belongs to the ATP phosphoribosyltransferase family. Long subfamily. Mg(2+) serves as cofactor.

It localises to the cytoplasm. It carries out the reaction 1-(5-phospho-beta-D-ribosyl)-ATP + diphosphate = 5-phospho-alpha-D-ribose 1-diphosphate + ATP. The protein operates within amino-acid biosynthesis; L-histidine biosynthesis; L-histidine from 5-phospho-alpha-D-ribose 1-diphosphate: step 1/9. Feedback inhibited by histidine. In terms of biological role, catalyzes the condensation of ATP and 5-phosphoribose 1-diphosphate to form N'-(5'-phosphoribosyl)-ATP (PR-ATP). Has a crucial role in the pathway because the rate of histidine biosynthesis seems to be controlled primarily by regulation of HisG enzymatic activity. The sequence is that of ATP phosphoribosyltransferase from Sulfurisphaera tokodaii (strain DSM 16993 / JCM 10545 / NBRC 100140 / 7) (Sulfolobus tokodaii).